The primary structure comprises 685 residues: ATP-dependent RNA helicase MSS116, mitochondrial (685 aa).

The N-terminal 34 residues, 1 to 34 (MLVLQRIPKRALQFNGVTGTVCSTRLFHHAFNLN), are a transit peptide targeting the mitochondrion. The segment at 42–107 (SEERRYRNSN…NNGSRRRYQD (66 aa)) is disordered. Over residues 58-69 (SDSNSNNKYRNS) the composition is skewed to low complexity. Positions 70–86 (SYDDNRSRSNYGGDKRN) are enriched in basic and acidic residues. Residues 88-99 (RNNNNYGNNRNN) are compositionally biased toward low complexity. The short motif at 138–166 (SLLEESLLDANVHKAISAMKFESLTPVQQ) is the Q motif element. The Helicase ATP-binding domain occupies 170–357 (KPILTTENDV…ATIMNKKDCL (188 aa)). 183-190 (AKTGTGKT) is an ATP binding site. The DEAD box motif lies at 298 to 301 (DEAD). In terms of domain architecture, Helicase C-terminal spans 386 to 542 (SMVALIQSIE…EDYLNQDKEN (157 aa)). The interval 633 to 685 (DREFDDEDRYTSRSQNNYKSKQSSKSNRFEGRNDYSNSRRSHANQKRNFTFDD) is disordered. A compositionally biased stretch (low complexity) spans 644–658 (SRSQNNYKSKQSSKS).

Belongs to the DEAD box helicase family. DDX18/HAS1 subfamily.

It is found in the mitochondrion matrix. The enzyme catalyses ATP + H2O = ADP + phosphate + H(+). ATP-dependent RNA helicase required for mitochondrial splicing of group I and II introns. Also required for efficient mitochondrial translation. This chain is ATP-dependent RNA helicase MSS116, mitochondrial (MSS116), found in Kluyveromyces lactis (strain ATCC 8585 / CBS 2359 / DSM 70799 / NBRC 1267 / NRRL Y-1140 / WM37) (Yeast).